Consider the following 421-residue polypeptide: NADP(+)-dependent glutamate dehydrogenase (421 aa).

Substrate is bound by residues K70 and K94. K106 acts as the Proton donor in catalysis. NADP(+)-binding residues include T190 and N221. Residue S354 coordinates substrate.

This sequence belongs to the Glu/Leu/Phe/Val dehydrogenases family. In terms of assembly, homohexamer.

It catalyses the reaction L-glutamate + NADP(+) + H2O = 2-oxoglutarate + NH4(+) + NADPH + H(+). Is not regulated allosterically. Activity is inhibited in the presence of high ionic strength; the inhibitory effect of KCl is slightly higher than that of NaCl. Functionally, catalyzes the reversible oxidative deamination of L-glutamate to 2-oxoglutarate and ammonia, thereby playing a key role at the intersection of the carbon and nitrogen metabolic pathways. Shows a high preference for NADP(+)/NADPH as the acceptor/donor over NAD(+)/NADH. May function in vivo in the synthetic direction. Also catalyzes at very low rates the oxidative deamination of L-2-aminobutyrate, and the reductive amination of 2-oxovalerate and 2-oxobutyrate. The protein is NADP(+)-dependent glutamate dehydrogenase of Pyrobaculum calidifontis (strain DSM 21063 / JCM 11548 / VA1).